Consider the following 274-residue polypeptide: Large ribosomal subunit protein uL2 (274 aa).

2 disordered regions span residues 28-55 (APHA…RHVG) and 224-274 (VAMN…RRRK).

This sequence belongs to the universal ribosomal protein uL2 family. As to quaternary structure, part of the 50S ribosomal subunit. Forms a bridge to the 30S subunit in the 70S ribosome.

Its function is as follows. One of the primary rRNA binding proteins. Required for association of the 30S and 50S subunits to form the 70S ribosome, for tRNA binding and peptide bond formation. It has been suggested to have peptidyltransferase activity; this is somewhat controversial. Makes several contacts with the 16S rRNA in the 70S ribosome. The chain is Large ribosomal subunit protein uL2 from Pseudomonas putida (strain GB-1).